The chain runs to 321 residues: Sideroflexin-3 (321 aa).

Methionine 1 bears the N-acetylmethionine mark. The next 4 membrane-spanning stretches (helical) occupy residues leucine 146–leucine 164, leucine 174–leucine 194, phenylalanine 226–isoleucine 246, and leucine 266–phenylalanine 286.

Belongs to the sideroflexin family.

It localises to the mitochondrion membrane. The catalysed reaction is L-serine(in) = L-serine(out). Mitochondrial serine transporter that mediates transport of serine into mitochondria, an important step of the one-carbon metabolism pathway. Mitochondrial serine is converted to glycine and formate, which then exits to the cytosol where it is used to generate the charged folates that serve as one-carbon donors. This is Sideroflexin-3 from Homo sapiens (Human).